The primary structure comprises 406 residues: Cholinephosphotransferase 1 (406 aa).

N-acetylalanine is present on alanine 2. Over 2-62 (AAGAGAGSAP…LLQWIPLWMA (61 aa)) the chain is Cytoplasmic. Residues 63–83 (PNSITLLGLAVNVVTTLVLIS) traverse the membrane as a helical segment. Residue asparagine 64 coordinates CDP-choline. Residues 84 to 93 (YCPTATEEAP) lie on the Lumenal side of the membrane. The helical transmembrane segment at 94–118 (YWTYLLCALGLFIYQSLDAIDGKQA) threads the bilayer. Mg(2+) is bound by residues aspartate 111 and aspartate 114. CDP-choline is bound at residue arginine 119. Topologically, residues 119–125 (RRTNSCS) are cytoplasmic. The chain crosses the membrane as a helical span at residues 126–150 (PLGELFDHGCDSLSTVFMAVGASIA). Aspartate 132 is a Mg(2+) binding site. The active-site Proton acceptor is the histidine 133. Aspartate 136 is a Mg(2+) binding site. The Lumenal portion of the chain corresponds to 151–160 (ARLGTYPDWF). Residues 161-179 (FFCSFIGMFVFYCAHWQTY) traverse the membrane as a helical segment. Over 180–190 (VSGMLRFGKVD) the chain is Cytoplasmic. The helical transmembrane segment at 191–207 (VTEIQIALVIVFVLSAF) threads the bilayer. Residues 208 to 222 (GGATMWDYTIPILEI) are Lumenal-facing. The helical transmembrane segment at 223-248 (KLKILPVLGFLGGVIFSCSNYFHVIL) threads the bilayer. Over 249–265 (HGGVGKNGSTIAGTSVL) the chain is Cytoplasmic. A helical membrane pass occupies residues 266–281 (SPGLHIGLIIILAIMI). Residues 282 to 293 (YKKSATDVFEKH) are Lumenal-facing. The chain crosses the membrane as a helical span at residues 294 to 316 (PCLYILMFGCVFAKVSQKLVVAH). The Cytoplasmic segment spans residues 317–329 (MTKSELYLQDTVF). A helical transmembrane segment spans residues 330-339 (LGPGLLFLDQ). The Lumenal portion of the chain corresponds to 340-346 (YFNNFID). Residues 347–376 (EYVVLWMAMVISSFDMVIYFSALCLQISRH) form a helical membrane-spanning segment. Over 377–406 (LHLNIFKTACHQAPEQVQVLSSKSHQNNMD) the chain is Cytoplasmic.

Belongs to the CDP-alcohol phosphatidyltransferase class-I family. The cofactor is Mg(2+). Mn(2+) serves as cofactor. In terms of tissue distribution, highly expressed in testis, colon, small intestine, heart, prostate and spleen. Also detected in kidney, skeletal muscle, pancreas, leukocytes, ovary and thymus. Weakly expressed in the brain, placenta and lung. Overexpressed in cancerous breast epithelial cell lines.

The protein resides in the golgi apparatus membrane. It carries out the reaction CDP-choline + a 1,2-diacyl-sn-glycerol = a 1,2-diacyl-sn-glycero-3-phosphocholine + CMP + H(+). It catalyses the reaction 1-octadecanoyl-2-(5Z,8Z,11Z,14Z-eicosatetraenoyl)-sn-glycerol + CDP-choline = 1-octadecanoyl-2-(5Z,8Z,11Z,14Z-eicosatetraenoyl)-sn-glycero-3-phosphocholine + CMP + H(+). The enzyme catalyses 1-hexadecanoyl-2-(9Z-octadecenoyl)-sn-glycerol + CDP-choline = 1-hexadecanoyl-2-(9Z-octadecenoyl)-sn-glycero-3-phosphocholine + CMP + H(+). The catalysed reaction is 1-hexadecanoyl-2-(4Z,7Z,10Z,13Z,16Z,19Z-docosahexaenoyl)-sn-glycerol + CDP-choline = 1-hexadecanoyl-2-(4Z,7Z,10Z,13Z,16Z,19Z-docosahexaenoyl)-sn-glycero-3-phosphocholine + CMP + H(+). It carries out the reaction 1,2-dioctanoyl-sn-glycerol + CDP-choline = 1,2-dioctanoyl-sn-glycero-3-phosphocholine + CMP + H(+). Its pathway is phospholipid metabolism; phosphatidylcholine biosynthesis; phosphatidylcholine from phosphocholine: step 2/2. Its function is as follows. Catalyzes the final step of de novo phosphatidylcholine (PC) synthesis, i.e. the transfer of choline phosphate from CDP-choline to the free hydroxyl of a diacylglycerol (DAG), producing a PC. It thereby plays a central role in the formation and maintenance of vesicular membranes. This Homo sapiens (Human) protein is Cholinephosphotransferase 1.